Consider the following 434-residue polypeptide: Enolase (434 aa).

Q165 contributes to the (2R)-2-phosphoglycerate binding site. E207 serves as the catalytic Proton donor. Mg(2+) is bound by residues D244, E291, and D318. (2R)-2-phosphoglycerate is bound by residues K343, R372, S373, and K394. Residue K343 is the Proton acceptor of the active site.

It belongs to the enolase family. Mg(2+) is required as a cofactor.

Its subcellular location is the cytoplasm. It localises to the secreted. The protein resides in the cell surface. The catalysed reaction is (2R)-2-phosphoglycerate = phosphoenolpyruvate + H2O. Its pathway is carbohydrate degradation; glycolysis; pyruvate from D-glyceraldehyde 3-phosphate: step 4/5. Its function is as follows. Catalyzes the reversible conversion of 2-phosphoglycerate (2-PG) into phosphoenolpyruvate (PEP). It is essential for the degradation of carbohydrates via glycolysis. The polypeptide is Enolase (Staphylococcus saprophyticus subsp. saprophyticus (strain ATCC 15305 / DSM 20229 / NCIMB 8711 / NCTC 7292 / S-41)).